Consider the following 804-residue polypeptide: Angiotensin-converting enzyme 2 (804 aa).

Positions 1–17 (MTGSFWLLLSLVAVTAA) are cleaved as a signal peptide. Topologically, residues 18-739 (QSTTEEQAKT…LGPPYEPPVT (722 aa)) are extracellular. The region spanning 19–606 (STTEEQAKTF…QNRNSFVGWS (588 aa)) is the Peptidase M2 domain. Residues asparagine 53 and asparagine 90 are each glycosylated (N-linked (GlcNAc...) asparagine). Arginine 168 is a binding site for chloride. Arginine 272 lines the substrate pocket. Residue asparagine 298 is glycosylated (N-linked (GlcNAc...) asparagine). Cysteine 343 and cysteine 360 are joined by a disulfide. 344 to 345 (HP) is a substrate binding site. Histidine 373 provides a ligand contact to Zn(2+). Glutamate 374 serves as the catalytic Proton acceptor. Zn(2+) is bound by residues histidine 377 and glutamate 401. The N-linked (GlcNAc...) asparagine glycan is linked to asparagine 431. 2 residues coordinate chloride: tryptophan 476 and lysine 480. The active-site Proton donor is the histidine 504. A substrate-binding site is contributed by tyrosine 514. Cysteines 529 and 541 form a disulfide. Residue asparagine 545 is glycosylated (N-linked (GlcNAc...) asparagine). Positions 613-804 (SDQSIKVRIS…QNIDDVQTSL (192 aa)) constitute a Collectrin-like domain. The segment at 651–658 (RKYFSEAR) is essential for cleavage by ADAM17. Residues asparagine 659 and asparagine 689 are each glycosylated (N-linked (GlcNAc...) asparagine). The essential for cleavage by TMPRSS11D and TMPRSS2 stretch occupies residues 696–715 (RTEVENAIRLSRDRINDVFQ). A helical membrane pass occupies residues 740-760 (IWLIIFGVVMGVVVIGIVVLI). Residues 761–804 (FTGIRNRRKKNQASSEENPYGSVDLNKGENNSGFQNIDDVQTSL) lie on the Cytoplasmic side of the membrane. Residues 771 to 804 (NQASSEENPYGSVDLNKGENNSGFQNIDDVQTSL) are disordered. An LIR motif is present at residues 777–785 (ENPYGSVDL). Phosphotyrosine is present on tyrosine 780. Positions 780-783 (YGSV) match the Endocytic sorting signal motif. Positions 780-784 (YGSVD) match the SH2-binding motif. Serine 782 carries the phosphoserine modification. Lysine 787 is covalently cross-linked (Glycyl lysine isopeptide (Lys-Gly) (interchain with G-Cter in ubiquitin)). The span at 788–804 (GENNSGFQNIDDVQTSL) shows a compositional bias: polar residues. Positions 791–794 (NSGF) match the PTB motif. Positions 802-804 (TSL) match the PDZ-binding motif.

The protein belongs to the peptidase M2 family. Homodimer. Interacts with the catalytically active form of TMPRSS2. Interacts with SLC6A19; this interaction is essential for expression and function of SLC6A19 in intestine. Interacts with ITGA5:ITGB1. Probably interacts (via endocytic sorting signal motif) with AP2M1; the interaction is inhibited by phosphorylation of Tyr-780. Interacts (via PDZ-binding motif) with NHERF1 (via PDZ domains); the interaction may enhance ACE2 membrane residence. Requires Zn(2+) as cofactor. Chloride serves as cofactor. Proteolytic cleavage by ADAM17 generates a secreted form. Also cleaved by serine proteases: TMPRSS2, TMPRSS11D and HPN/TMPRSS1. In terms of processing, phosphorylated. Phosphorylation at Tyr-780 probably inhibits interaction with AP2M1 and enables interactions with proteins containing SH2 domains. Post-translationally, ubiquitinated. Ubiquitinated on Lys-787 via 'Lys-48'-linked ubiquitin. 'Lys-48'-linked deubiquitinated by USP50 on the Lys-787; leading to its stabilization.

The protein localises to the secreted. It is found in the cell membrane. It localises to the cytoplasm. Its subcellular location is the cell projection. The protein resides in the cilium. The protein localises to the apical cell membrane. The enzyme catalyses angiotensin II + H2O = angiotensin-(1-7) + L-phenylalanine. It catalyses the reaction angiotensin I + H2O = angiotensin-(1-9) + L-leucine. It carries out the reaction bradykinin(1-8) + H2O = bradykinin(1-7) + L-phenylalanine. The catalysed reaction is neurotensin + H2O = neurotensin-(1-12) + L-leucine. The enzyme catalyses kinetensin + H2O = kinetensin-(1-8) + L-leucine. It catalyses the reaction dynorphin A-(1-13) + H2O = dynorphin A-(1-12) + L-lysine. It carries out the reaction apelin-13 + H2O = apelin-12 + L-phenylalanine. The catalysed reaction is [Pyr1]apelin-13 + H2O = [Pyr1]apelin-12 + L-phenylalanine. The enzyme catalyses apelin-17 + H2O = apelin-16 + L-phenylalanine. Its function is as follows. Essential counter-regulatory carboxypeptidase of the renin-angiotensin hormone system that is a critical regulator of blood volume, systemic vascular resistance, and thus cardiovascular homeostasis. Converts angiotensin I to angiotensin 1-9, a nine-amino acid peptide with anti-hypertrophic effects in cardiomyocytes, and angiotensin II to angiotensin 1-7, which then acts as a beneficial vasodilator and anti-proliferation agent, counterbalancing the actions of the vasoconstrictor angiotensin II. Also removes the C-terminal residue from three other vasoactive peptides, neurotensin, kinetensin, and des-Arg bradykinin, but is not active on bradykinin. Also cleaves other biological peptides, such as apelins, casomorphins and dynorphin A. Plays an important role in amino acid transport by acting as binding partner of amino acid transporter SLC6A19 in intestine, regulating trafficking, expression on the cell surface, and its catalytic activity. This is Angiotensin-converting enzyme 2 (ACE2) from Bos taurus (Bovine).